A 75-amino-acid polypeptide reads, in one-letter code: U-stichotoxin-Hau3a (75 aa).

A signal peptide spans Met-1–Ala-19. Positions Glu-20 to Arg-26 are excised as a propeptide. Cystine bridges form between Cys-31-Cys-71, Cys-33-Cys-61, and Cys-54-Cys-72.

Belongs to the sea anemone sodium channel inhibitory toxin family. Type I subfamily. Post-translationally, contains 3 disulfide bonds.

The protein localises to the secreted. The protein resides in the nematocyst. Its function is as follows. Toxin that is lethal to crab. In Heteractis aurora (Banded sea anemone), this protein is U-stichotoxin-Hau3a.